Consider the following 238-residue polypeptide: Pyridoxine 5'-phosphate synthase (238 aa).

Position 7 (Asn-7) interacts with 3-amino-2-oxopropyl phosphate. Position 9–10 (9–10 (DH)) interacts with 1-deoxy-D-xylulose 5-phosphate. Arg-18 provides a ligand contact to 3-amino-2-oxopropyl phosphate. The active-site Proton acceptor is the His-43. The 1-deoxy-D-xylulose 5-phosphate site is built by Arg-45 and His-50. The active-site Proton acceptor is the Glu-70. Position 100 (Thr-100) interacts with 1-deoxy-D-xylulose 5-phosphate. His-191 functions as the Proton donor in the catalytic mechanism. Residues Gly-192 and 213–214 (GH) each bind 3-amino-2-oxopropyl phosphate.

The protein belongs to the PNP synthase family. As to quaternary structure, homooctamer; tetramer of dimers.

It is found in the cytoplasm. The catalysed reaction is 3-amino-2-oxopropyl phosphate + 1-deoxy-D-xylulose 5-phosphate = pyridoxine 5'-phosphate + phosphate + 2 H2O + H(+). Its pathway is cofactor biosynthesis; pyridoxine 5'-phosphate biosynthesis; pyridoxine 5'-phosphate from D-erythrose 4-phosphate: step 5/5. Catalyzes the complicated ring closure reaction between the two acyclic compounds 1-deoxy-D-xylulose-5-phosphate (DXP) and 3-amino-2-oxopropyl phosphate (1-amino-acetone-3-phosphate or AAP) to form pyridoxine 5'-phosphate (PNP) and inorganic phosphate. The sequence is that of Pyridoxine 5'-phosphate synthase from Syntrophobacter fumaroxidans (strain DSM 10017 / MPOB).